Here is a 722-residue protein sequence, read N- to C-terminus: Polyribonucleotide nucleotidyltransferase (722 aa).

The Mg(2+) site is built by Asp486 and Asp492. A KH domain is found at 553–612 (PRITTIQIRPEFIKNVIGPGGKVIKDIIARTGAAINIEDSGRVDIASANGEAVKAAIAMI). The S1 motif domain maps to 622–690 (GKIYTGTVRK…KTGKIRLSRK (69 aa)). The tract at residues 696–722 (RAAQQGAAAGEAAAQPAPAPTQPDAKA) is disordered.

Belongs to the polyribonucleotide nucleotidyltransferase family. It depends on Mg(2+) as a cofactor.

It localises to the cytoplasm. It catalyses the reaction RNA(n+1) + phosphate = RNA(n) + a ribonucleoside 5'-diphosphate. Its function is as follows. Involved in mRNA degradation. Catalyzes the phosphorolysis of single-stranded polyribonucleotides processively in the 3'- to 5'-direction. The polypeptide is Polyribonucleotide nucleotidyltransferase (Myxococcus xanthus (strain DK1622)).